Reading from the N-terminus, the 404-residue chain is Protein IQ-DOMAIN 12 (404 aa).

Residues 8 to 25 (FGWMKRLFICEAKARAEK) form a calmodulin-binding region. The Nuclear localization signal 1 signature appears at 11-18 (MKRLFICE). 2 consecutive IQ domains span residues 108–135 (NVAAIKIQSAFRASLARKALRALKALVR) and 136–158 (LQAIVRGRAVRRKVSALLKSSHS). The Nuclear localization signal 2 motif lies at 226 to 233 (IKRDRMLK).

Belongs to the IQD family. In terms of assembly, binds to multiple calmodulin (CaM) in the presence of Ca(2+) and CaM-like proteins.

Its subcellular location is the nucleus. The protein localises to the cell membrane. In terms of biological role, may be involved in cooperative interactions with calmodulins or calmodulin-like proteins. Recruits calmodulin proteins to microtubules, thus being a potential scaffold in cellular signaling and trafficking. May associate with nucleic acids and regulate gene expression at the transcriptional or post-transcriptional level. This chain is Protein IQ-DOMAIN 12, found in Arabidopsis thaliana (Mouse-ear cress).